A 620-amino-acid chain; its full sequence is Ran-binding protein 10 (620 aa).

The segment at 1-38 (MAAATADPGAGNPQAGDSSGGDSGGGLPSPGEQELSRR) is disordered. N-acetylalanine is present on A2. Residues 18-28 (SSGGDSGGGLP) are compositionally biased toward gly residues. Positions 35–222 (LSRRLQRLYP…VDANFGQQPF (188 aa)) constitute a B30.2/SPRY domain. Residues 253–285 (WQAVLQNMVSSYLVHHGYCSTATAFARMTETPI) form the LisH domain. Residues 291–348 (SIKNRQKIQKLVLEGRVGEAIETTQRFYPGLLEHNPNLLFMLKCRQFVEMVNGTDSEV) form the CTLH domain. A compositionally biased stretch (polar residues) spans 347-398 (EVRSLSSRSPKSQDSYPGSPSLSPRHGPSSSHIHNTGADSPSCSNGVASTKN). The interval 347 to 460 (EVRSLSSRSP…SDSEMEMEAE (114 aa)) is disordered. At S361 the chain carries Phosphoserine. Y362 bears the Phosphotyrosine mark. Phosphoserine is present on residues S365, S367, S369, and S422. Residues 409-436 (SSSSSSSSSSSSSSPSSVNYSESNSTDS) show a composition bias toward low complexity. A compositionally biased stretch (polar residues) spans 437–450 (TKSQPHSSTSNQET). Phosphoserine occurs at positions 451 and 453.

This sequence belongs to the RANBP9/10 family. In terms of assembly, may form homodimers. Identified in the CTLH complex that contains GID4, RANBP9 and/or RANBP10, MKLN1, MAEA, RMND5A (or alternatively its paralog RMND5B), GID8, ARMC8, WDR26 and YPEL5. Within this complex, MAEA, RMND5A (or alternatively its paralog RMND5B), GID8, WDR26, and RANBP9 and/or RANBP10 form the catalytic core, while GID4, MKLN1, ARMC8 and YPEL5 have ancillary roles. Interacts with RAN and RANBP9. Interacts with the HGF receptor MET. Interacts with AR. Interacts with TUBB1. Interacts with YPEL5. May interact with TUBB5. Interacts with DDX4. In terms of tissue distribution, expressed at highest levels in spleen and liver. Expressed in megakaryocytes and platelets (at protein level).

It is found in the cytoplasm. The protein resides in the nucleus. Its function is as follows. May act as an adapter protein to couple membrane receptors to intracellular signaling pathways. Core component of the CTLH E3 ubiquitin-protein ligase complex that selectively accepts ubiquitin from UBE2H and mediates ubiquitination and subsequent proteasomal degradation of the transcription factor HBP1. Enhances dihydrotestosterone-induced transactivation activity of AR, as well as dexamethasone-induced transactivation activity of NR3C1, but does not affect estrogen-induced transactivation. Acts as a guanine nucleotide exchange factor (GEF) for RAN GTPase. May play an essential role in hemostasis and in maintaining microtubule dynamics with respect to both platelet shape and function. The protein is Ran-binding protein 10 (Ranbp10) of Mus musculus (Mouse).